The chain runs to 899 residues: Protein translocase subunit SecA (899 aa).

Residues glutamine 87, 105-109, and aspartate 516 contribute to the ATP site; that span reads GEGKT. Zn(2+) is bound by residues cysteine 884, cysteine 886, cysteine 895, and histidine 896.

Belongs to the SecA family. In terms of assembly, monomer and homodimer. Part of the essential Sec protein translocation apparatus which comprises SecA, SecYEG and auxiliary proteins SecDF. Other proteins may also be involved. Zn(2+) serves as cofactor.

The protein resides in the cell inner membrane. It localises to the cytoplasm. The enzyme catalyses ATP + H2O + cellular proteinSide 1 = ADP + phosphate + cellular proteinSide 2.. Part of the Sec protein translocase complex. Interacts with the SecYEG preprotein conducting channel. Has a central role in coupling the hydrolysis of ATP to the transfer of proteins into and across the cell membrane, serving as an ATP-driven molecular motor driving the stepwise translocation of polypeptide chains across the membrane. This chain is Protein translocase subunit SecA, found in Borreliella burgdorferi (strain ATCC 35210 / DSM 4680 / CIP 102532 / B31) (Borrelia burgdorferi).